Consider the following 472-residue polypeptide: MKIYRVAKASEYLVITGILIKDIKLAKKAWILPGQSCSVLDLSPVNYTFEVQAMSAEKLPFVLPAVFTIGPRVDDKESLLKYAKLISPHARHSNHVNELVQGIIEGETRVLAASMTMEEVFRGTKQFKQEVFDKVQLELNQFGLLIYNANVKQLVDVRGHEYFSYLGQKTQMEAKNQARVDVAEAKMKGEIGSKLREGQTLQNAAKIDAETKVIAMQRAGEGEKEGIKVRTEVKVFENQREAEVAQANSELAKKKAAWTKAAQVAEVEAKKAVKLREAELQGEVERMNALTTTEKLKAEFLSKASVQYETKVQEANWELYKKQKEAEAILYEKKAEAEAQKASADATFYASKQAAEAELYAKKKEAEGIVTVGQAQGVYVSKLLNALGNDYTAVRDYLMINGGMFQEIAKINAEAIRGLEPKISIWTNGGEAGGMKEVAGVYKMLPPLFKTVHEQTGMLPPAWMGVLPDKNS.

The S-palmitoyl cysteine moiety is linked to residue Cys-37. A coiled-coil region spans residues 237–327 (ENQREAEVAQ…ELYKKQKEAE (91 aa)).

It belongs to the band 7/mec-2 family. Flotillin subfamily. Post-translationally, may be palmitoylated. In terms of tissue distribution, very low occasional expression in roots and nodules.

The protein resides in the cell membrane. The protein localises to the membrane. Its subcellular location is the caveola. May act as a scaffolding protein within caveolar membranes, functionally participating in formation of caveolae or caveolae-like vesicles. May be involved in nodule formation. This Medicago truncatula (Barrel medic) protein is Flotillin-like protein 6 (FLOT6).